The sequence spans 525 residues: ATP synthase subunit alpha (525 aa).

172–179 contributes to the ATP binding site; the sequence is GDRQTGKT.

Belongs to the ATPase alpha/beta chains family. As to quaternary structure, F-type ATPases have 2 components, CF(1) - the catalytic core - and CF(0) - the membrane proton channel. CF(1) has five subunits: alpha(3), beta(3), gamma(1), delta(1), epsilon(1). CF(0) has three main subunits: a(1), b(2) and c(9-12). The alpha and beta chains form an alternating ring which encloses part of the gamma chain. CF(1) is attached to CF(0) by a central stalk formed by the gamma and epsilon chains, while a peripheral stalk is formed by the delta and b chains.

The protein localises to the cell inner membrane. The enzyme catalyses ATP + H2O + 4 H(+)(in) = ADP + phosphate + 5 H(+)(out). In terms of biological role, produces ATP from ADP in the presence of a proton gradient across the membrane. The alpha chain is a regulatory subunit. The sequence is that of ATP synthase subunit alpha from Parabacteroides distasonis (strain ATCC 8503 / DSM 20701 / CIP 104284 / JCM 5825 / NCTC 11152).